We begin with the raw amino-acid sequence, 222 residues long: uncharacterized protein (222 aa).

The N-myristoyl glycine; by host moiety is linked to residue Gly-2.

This sequence belongs to the mimivirus R683/R861 family.

This is an uncharacterized protein from Acanthamoeba polyphaga mimivirus (APMV).